A 92-amino-acid polypeptide reads, in one-letter code: MNDQTPDRYVTFMGIACDTNADRLCEMLAARMAGNDSRWVAYFEKKLAENAQMGHDRLRFIGAQVNALMSFFEEEDDEAALALLWHIEHHCL.

Belongs to the CowN family.

Functionally, is required to sustain N(2)-dependent growth in the presence of low levels of carbon monoxide (CO). Probably acts by protecting the N(2) fixation ability of the nitrogenase complex, which is inactivated in the presence of CO. The chain is N(2)-fixation sustaining protein CowN from Rhodobacter capsulatus (strain ATCC BAA-309 / NBRC 16581 / SB1003).